The sequence spans 146 residues: UPF0178 protein Lin1493 (146 aa).

The protein belongs to the UPF0178 family.

In Listeria innocua serovar 6a (strain ATCC BAA-680 / CLIP 11262), this protein is UPF0178 protein Lin1493.